The following is a 780-amino-acid chain: MKKRFPTLLATLIWTALYSQHTLADLAEQCMLGVPTYDQPLVTGDPNQLPVRINADKTEANYPDNALFTGNVIVQQGNSTLTANQVELTQVQKPGEVIPLRTVTATGDVNYDDPQIKLKGPKGWSNLNTKDTDMDKGKYQMVGRQGRGDADLMKLRDQSRYTILKNGTFTSCLPGDNSWSVVGSEVIHDREEQVVEVWNARFKIGKVPVFYSPYMQLPVGDKRRSGFLIPNAKFTSNNGFEFLLPYYWNIAPNFDATITPHYMERRGLQWQNEFRYLLAPGSGTMALDWLPNDRIYTGPDGTDKNATRWLYYWGHSGVMDQVWRFNINYTRVSDPAYFTDLTSQYGSTTDGYATQIFTAGYANENWNATLSSKQFQVFTAAGNSNAYRAQPQLDMNYYKNDVGPFDMHVYGQAAKFTSVNPTNPEASRFHIEPTVNLPLSNSWGSINTEAKLLATHYQQDIPASFADNASNPKLKDSVNRVLPQFKVDGKVVFDRSMDWATGFTQTLEPRAQYLYVPYRNQDDIYIYDTTLMQSDYSGLFRDRTYSGLDRIASANQVSTGLTSRIYDDARVERFNVSVGQIYYFSRSRTGNTEAIDNSNATGSLVWAGDTFWRINDQLGLKGGAQYDTRLGSLTLGNAIMEYRKDADRMIQLNYRYASPKYIQAAVPKVYNPDYQQGISQVGTTASWPIADRWAIVGAYYYDTKAKQPASQLVGLQYNTCCWAVNLGYERKITGWNAQGQTSKYDNKIGFNIELRGLSGGHSLGTAQMLNSGILPYQSAF.

The N-terminal stretch at 1–24 (MKKRFPTLLATLIWTALYSQHTLA) is a signal peptide.

The protein belongs to the LptD family. Component of the lipopolysaccharide transport and assembly complex. Interacts with LptE and LptA.

The protein localises to the cell outer membrane. In terms of biological role, together with LptE, is involved in the assembly of lipopolysaccharide (LPS) at the surface of the outer membrane. This chain is LPS-assembly protein LptD, found in Yersinia pestis bv. Antiqua (strain Antiqua).